The sequence spans 897 residues: MDSLSAYPPQSTFQQLQNDEELARRLQDEWNSSSPSSAPSSSSSQNQVELDEQFARSLQNSQSSSYSLPPFDHPPSKNPTSSSLSTRKRWRQKRLWSFKNFPFRPPTRLTSTPSNSSSLPSIPSSSSTPSISSIPHTTSSVSNDIPSVLGSSDHPIDLDNPEHLTPPSSFITAKQLSRLPTPLPPPSSSSLPTGTISTNSFCPYERKVQPEHVTKELHQLLQHNTPSPFDTIDLQLKNEQVQSAGLLVSLLPHQVEGHAWMESMEQSSKCGGVMADDMGLGKTIQTIALLLTQKSQDPLRKTNLIVVSVALLHQWAEELSTKVHPSKKLSVYIHHGSTKKNLDSYELSQYDVVLTTYSMLAYEMKQNDAFNNNNPATATPPPACSLLETSWYRIVLDEAHTIRNRDTLAAKCCVKLDAKYRWCLSGTPIQNHIDEFYSLLKFLRIKPYCVWSLFAKDISRPLKSYRADIVEAALKRLRILLASTVFRRTKETRVNNLPIVNLPPKTIRTVSVNLLPEERALYNEQMSSAQSLVDNYFNNDHDLSRYGFLLVSLLRLRQFCCHPWLVKSSSLDNSFRIRDSENVRNACKSLDPLTIERIATLQDFNCSVCLDPCLAPVFIIPCGHFTCQECMSMLVGQKYGSSSTSTIIAKCPMCRGNIVQDSLVDATILQAIHGPLNSLKQLELDMNQSFSEQESIKLRWENRIDQMFTKKFGKRASEWKSSSKLNQARQTILDIIGSKRNEKILVYSQFSQYLCLVSHMLKLENIRHVRYDGTMSANQRQKSLHSFNNDKDVLVMLVSLKAGSVGLNLTIANHVILQEPFYNPSIEDQAIDRVHRLGQQKPVTVYRFITKDTIEERIVSVQRKKRQLVKEALDSNENNPLSRLDKEELLYLFGLNS.

Disordered stretches follow at residues R25 to R89 and P106 to S168. Low complexity-rich tracts occupy residues S32–S44, S57–L68, and P106–S142. The Helicase ATP-binding domain maps to S263–K446. ATP is bound at residue D276 to T283. The short motif at D397 to H400 is the DEAH box element. The RING-type zinc-finger motif lies at C606–R655. One can recognise a Helicase C-terminal domain in the interval Q727–L890.

It belongs to the SNF2/RAD54 helicase family.

The protein resides in the cytoplasm. The protein localises to the nucleus. This is an uncharacterized protein from Schizosaccharomyces pombe (strain 972 / ATCC 24843) (Fission yeast).